We begin with the raw amino-acid sequence, 285 residues long: Ribosomal RNA small subunit methyltransferase I (285 aa).

Belongs to the methyltransferase superfamily. RsmI family.

It localises to the cytoplasm. The catalysed reaction is cytidine(1402) in 16S rRNA + S-adenosyl-L-methionine = 2'-O-methylcytidine(1402) in 16S rRNA + S-adenosyl-L-homocysteine + H(+). Its function is as follows. Catalyzes the 2'-O-methylation of the ribose of cytidine 1402 (C1402) in 16S rRNA. The sequence is that of Ribosomal RNA small subunit methyltransferase I from Buchnera aphidicola subsp. Schizaphis graminum (strain Sg).